Here is a 106-residue protein sequence, read N- to C-terminus: A-type ATP synthase subunit F (106 aa).

Belongs to the V-ATPase F subunit family. As to quaternary structure, has multiple subunits with at least A(3), B(3), C, D, E, F, H, I and proteolipid K(x).

Its subcellular location is the cell membrane. Component of the A-type ATP synthase that produces ATP from ADP in the presence of a proton gradient across the membrane. The sequence is that of A-type ATP synthase subunit F from Haloferax volcanii (strain ATCC 29605 / DSM 3757 / JCM 8879 / NBRC 14742 / NCIMB 2012 / VKM B-1768 / DS2) (Halobacterium volcanii).